Here is a 224-residue protein sequence, read N- to C-terminus: Artemin (224 aa).

The signal sequence occupies residues 1 to 39; the sequence is MELGLGEPTALSHCLRPRWQPALWPTLAALALLSSVTEA. Residues 40-111 constitute a propeptide that is removed on maturation; it reads SLDPMSRSPA…AALRGARAAR (72 aa). The disordered stretch occupies residues 41 to 124; it reads LDPMSRSPAS…RSSRARATDA (84 aa). Positions 80 to 95 are enriched in pro residues; that stretch reads RPPPQSPQPAPPPPGP. Residues 96–116 are compositionally biased toward low complexity; it reads ALQSPPAALRGARAARAGTRS. 3 disulfides stabilise this stretch: Cys127-Cys192, Cys154-Cys220, and Cys158-Cys222. N-linked (GlcNAc...) asparagine glycosylation is present at Asn206.

The protein belongs to the TGF-beta family. GDNF subfamily. As to quaternary structure, homodimer; disulfide-linked. Interacts with GFRA3 coreceptor and RET: forms a 2:2:2 ternary complex composed of ARTN ligand, GFRA3 and RET receptor. Cochlea. Expressed at higher level in sesorineural epithelium than in the modiolus region or substantia nigra.

It localises to the secreted. Functionally, growth factor that supports the survival of sensory and sympathetic peripheral neurons in culture and also supports the survival of dopaminergic neurons of the ventral mid-brain. Acts by binding to its coreceptor, GFRA3, leading to autophosphorylation and activation of the RET receptor. Strong attractant of gut hematopoietic cells thus promoting the formation Peyer's patch-like structures, a major component of the gut-associated lymphoid tissue. This chain is Artemin (Artn), found in Rattus norvegicus (Rat).